The chain runs to 269 residues: Ribonuclease HII (269 aa).

The region spanning 83-269 is the RNase H type-2 domain; that stretch reads YLIAGVDEVG…HRMSFLTNIL (187 aa). Positions 89, 90, and 185 each coordinate a divalent metal cation.

Belongs to the RNase HII family. Mn(2+) serves as cofactor. Requires Mg(2+) as cofactor.

It localises to the cytoplasm. The enzyme catalyses Endonucleolytic cleavage to 5'-phosphomonoester.. Endonuclease that specifically degrades the RNA of RNA-DNA hybrids. The protein is Ribonuclease HII of Clostridium botulinum (strain Langeland / NCTC 10281 / Type F).